Here is a 550-residue protein sequence, read N- to C-terminus: Hydroxylamine reductase (550 aa).

The [2Fe-2S] cluster site is built by C3, C6, C18, and C25. Positions 249, 273, 317, 405, 433, 458, 492, and 494 each coordinate hybrid [4Fe-2O-2S] cluster. Residue C405 is modified to Cysteine persulfide.

It belongs to the HCP family. [2Fe-2S] cluster serves as cofactor. It depends on hybrid [4Fe-2O-2S] cluster as a cofactor.

Its subcellular location is the cytoplasm. It catalyses the reaction A + NH4(+) + H2O = hydroxylamine + AH2 + H(+). In terms of biological role, catalyzes the reduction of hydroxylamine to form NH(3) and H(2)O. The protein is Hydroxylamine reductase of Salmonella choleraesuis (strain SC-B67).